The chain runs to 346 residues: Endosome-associated-trafficking regulator 1 (346 aa).

The segment covering 46 to 67 has biased composition (polar residues); it reads FVSSNSKRAFSKDSNQSTTQFR. Disordered regions lie at residues 46 to 77, 93 to 129, and 153 to 173; these read FVSS…DGNL, LQED…GDES, and SPPA…SDSE. Residues 170–317 adopt a coiled-coil conformation; that stretch reads SDSEEGLRLL…SGAQSSIKQL (148 aa).

It belongs to the ENTR1 family.

The protein resides in the cytoplasm. Its subcellular location is the early endosome. It localises to the endosome. The protein localises to the recycling endosome. It is found in the midbody. The protein resides in the cytoskeleton. Its subcellular location is the microtubule organizing center. It localises to the centrosome. The protein localises to the cilium basal body. Its function is as follows. Endosome-associated protein that plays a role in membrane receptor sorting, cytokinesis and ciliogenesis. This chain is Endosome-associated-trafficking regulator 1, found in Xenopus tropicalis (Western clawed frog).